Here is a 406-residue protein sequence, read N- to C-terminus: Phosphopentomutase (406 aa).

Residues Asp10, Asp305, His310, Asp346, His347, and His358 each contribute to the Mn(2+) site.

The protein belongs to the phosphopentomutase family. Mn(2+) is required as a cofactor.

It is found in the cytoplasm. The catalysed reaction is 2-deoxy-alpha-D-ribose 1-phosphate = 2-deoxy-D-ribose 5-phosphate. It carries out the reaction alpha-D-ribose 1-phosphate = D-ribose 5-phosphate. Its pathway is carbohydrate degradation; 2-deoxy-D-ribose 1-phosphate degradation; D-glyceraldehyde 3-phosphate and acetaldehyde from 2-deoxy-alpha-D-ribose 1-phosphate: step 1/2. In terms of biological role, isomerase that catalyzes the conversion of deoxy-ribose 1-phosphate (dRib-1-P) and ribose 1-phosphate (Rib-1-P) to deoxy-ribose 5-phosphate (dRib-5-P) and ribose 5-phosphate (Rib-5-P), respectively. This Sinorhizobium medicae (strain WSM419) (Ensifer medicae) protein is Phosphopentomutase.